We begin with the raw amino-acid sequence, 375 residues long: Membrane progesterone receptor epsilon (375 aa).

The interval M1–T39 is disordered. The Cytoplasmic segment spans residues M1 to N84. The segment covering P15–T39 has biased composition (low complexity). The helical transmembrane segment at F85–L105 threads the bilayer. Residues G106–H114 lie on the Extracellular side of the membrane. The chain crosses the membrane as a helical span at residues P115–C135. Residues T136–S160 are Cytoplasmic-facing. Residues Y161–L181 traverse the membrane as a helical segment. The Extracellular portion of the chain corresponds to D182–L203. Residues I204 to V224 traverse the membrane as a helical segment. The Cytoplasmic portion of the chain corresponds to A225–R241. Residues T242 to F262 form a helical membrane-spanning segment. Residues D263–P299 are Extracellular-facing. A helical membrane pass occupies residues G300–I320. Residues Y321–A341 are Cytoplasmic-facing. A helical transmembrane segment spans residues P342–I362. Residues R363 to K375 lie on the Extracellular side of the membrane.

Belongs to the ADIPOR family. In terms of assembly, homodimer.

The protein localises to the cell membrane. Functionally, plasma membrane progesterone (P4) receptor coupled to G proteins. Seems to act through a G(s) mediated pathway. May be involved in regulating rapid P4 signaling in the nervous system. Also binds dehydroepiandrosterone (DHEA), pregnanolone, pregnenolone and allopregnanolone. The sequence is that of Membrane progesterone receptor epsilon from Mus musculus (Mouse).